A 900-amino-acid chain; its full sequence is Translation initiation factor IF-2 (900 aa).

Positions 48–310 are disordered; it reads HLNRDRGNAP…KPSSLQQSFN (263 aa). Polar residues predominate over residues 68–82; the sequence is STLNVPSTGGKSKSV. Composition is skewed to basic and acidic residues over residues 85–98 and 108–164; these read EVRK…RDPI and QARR…KEKV. Polar residues predominate over residues 165-176; it reads TNQQNENMTKPA. Residues 177–237 are compositionally biased toward basic and acidic residues; the sequence is QSEKAKREAE…SATKPEESAD (61 aa). Residues 263 to 277 are compositionally biased toward basic residues; it reads TRTRAAKVTKQKKGN. Residues 278–291 show a composition bias toward basic and acidic residues; sequence RQSESKADREEARA. The 170-residue stretch at 399-568 folds into the tr-type G domain; that stretch reads FRAPVVTIMG…LLQAEVLELK (170 aa). A G1 region spans residues 408 to 415; that stretch reads GHVDHGKT. 408 to 415 provides a ligand contact to GTP; sequence GHVDHGKT. Residues 433-437 form a G2 region; it reads GITQH. A G3 region spans residues 454-457; that stretch reads DTPG. GTP contacts are provided by residues 454–458 and 508–511; these read DTPGH and NKID. Residues 508 to 511 form a G4 region; it reads NKID. Residues 544 to 546 are G5; it reads SAK.

It belongs to the TRAFAC class translation factor GTPase superfamily. Classic translation factor GTPase family. IF-2 subfamily.

It is found in the cytoplasm. Functionally, one of the essential components for the initiation of protein synthesis. Protects formylmethionyl-tRNA from spontaneous hydrolysis and promotes its binding to the 30S ribosomal subunits. Also involved in the hydrolysis of GTP during the formation of the 70S ribosomal complex. The chain is Translation initiation factor IF-2 from Pectobacterium atrosepticum (strain SCRI 1043 / ATCC BAA-672) (Erwinia carotovora subsp. atroseptica).